Consider the following 236-residue polypeptide: Purine nucleoside phosphorylase DeoD-type (236 aa).

Residue His5 participates in a purine D-ribonucleoside binding. Residues Gly21, Arg25, Arg44, and 88–91 contribute to the phosphate site; that span reads RVGT. Residues 180 to 182 and 204 to 205 contribute to the a purine D-ribonucleoside site; these read EME and SD. Asp205 (proton donor) is an active-site residue.

This sequence belongs to the PNP/UDP phosphorylase family. In terms of assembly, homohexamer; trimer of homodimers.

It carries out the reaction a purine D-ribonucleoside + phosphate = a purine nucleobase + alpha-D-ribose 1-phosphate. It catalyses the reaction a purine 2'-deoxy-D-ribonucleoside + phosphate = a purine nucleobase + 2-deoxy-alpha-D-ribose 1-phosphate. Its function is as follows. Catalyzes the reversible phosphorolytic breakdown of the N-glycosidic bond in the beta-(deoxy)ribonucleoside molecules, with the formation of the corresponding free purine bases and pentose-1-phosphate. In Shewanella denitrificans (strain OS217 / ATCC BAA-1090 / DSM 15013), this protein is Purine nucleoside phosphorylase DeoD-type.